Here is a 231-residue protein sequence, read N- to C-terminus: Flagellar L-ring protein (231 aa).

The N-terminal stretch at Met1–Gly18 is a signal peptide. Residue Cys19 is the site of N-palmitoyl cysteine attachment. Cys19 is lipidated: S-diacylglycerol cysteine.

Belongs to the FlgH family. As to quaternary structure, the basal body constitutes a major portion of the flagellar organelle and consists of four rings (L,P,S, and M) mounted on a central rod.

The protein localises to the cell outer membrane. The protein resides in the bacterial flagellum basal body. In terms of biological role, assembles around the rod to form the L-ring and probably protects the motor/basal body from shearing forces during rotation. The polypeptide is Flagellar L-ring protein (Pseudomonas putida (strain GB-1)).